The sequence spans 550 residues: Medium-chain acyl-CoA ligase Mig (550 aa).

The signal sequence occupies residues 1–19 (MSDTTTAFTVPAVAKAVAA).

This sequence belongs to the ATP-dependent AMP-binding enzyme family.

The protein localises to the secreted. Its subcellular location is the cell wall. It carries out the reaction a medium-chain fatty acid + ATP + CoA = a medium-chain fatty acyl-CoA + AMP + diphosphate. The enzyme catalyses hexanoate + ATP + CoA = hexanoyl-CoA + AMP + diphosphate. It catalyses the reaction heptanoate + ATP + CoA = heptanoyl-CoA + AMP + diphosphate. The catalysed reaction is octanoate + ATP + CoA = octanoyl-CoA + AMP + diphosphate. It carries out the reaction decanoate + ATP + CoA = decanoyl-CoA + AMP + diphosphate. The enzyme catalyses dodecanoate + ATP + CoA = dodecanoyl-CoA + AMP + diphosphate. It catalyses the reaction tetradecanoate + ATP + CoA = tetradecanoyl-CoA + AMP + diphosphate. The catalysed reaction is (9Z)-octadecenoate + ATP + CoA = (9Z)-octadecenoyl-CoA + AMP + diphosphate. It carries out the reaction (9Z,12Z,15Z)-octadecatrienoate + ATP + CoA = (9Z,12Z,15Z)-octadecatrienoyl-CoA + AMP + diphosphate. The enzyme catalyses (5Z,8Z,11Z,14Z)-eicosatetraenoate + ATP + CoA = (5Z,8Z,11Z,14Z)-eicosatetraenoyl-CoA + AMP + diphosphate. Its pathway is lipid metabolism; fatty acid metabolism. Inhibited by 2-hydroxydodecanoic acid, a typical inhibitor of medium-chain acyl-CoA synthetases. In terms of biological role, catalyzes the activation of medium-chain fatty acids as acyl-coenzyme A (acyl-CoA). Shows maximal activity with saturated fatty acids of medium-chain length between C6 and C12. Has lower activity with tridecanoic acid (C13), tetradecanoic acid (C14) and with unsaturated fatty acids like oleic acid (C18:1), linolenic acid (C18:3) and arachidonic acid (C20:4). Shows weak activity with some aromatic carbon acids. Involved in the metabolism of fatty acid during mycobacterial survival in macrophages. The polypeptide is Medium-chain acyl-CoA ligase Mig (Mycobacterium avium).